We begin with the raw amino-acid sequence, 782 residues long: Sulfate permease family protein 3 (782 aa).

Helical transmembrane passes span 30–52 (YACS…TWLP), 64–84 (LSGG…LASI), 86–106 (GVPP…YIFF), 113–133 (ALGG…KVML), 196–216 (IHVA…MGVF), 232–252 (GFVV…MLGI), 274–294 (LDNV…FLVF), 302–322 (WLNS…VVGI), 359–379 (HIGL…ITVA), 398–418 (ALGF…TSGF), 433–453 (LTCL…GPAL), and 497–517 (FFLT…GFAV). In terms of domain architecture, STAS spans 546-700 (KRDLERIQGN…NKVGDAVKAA (155 aa)). Over residues 728–742 (IDEESSDSNDNDDAE) the composition is skewed to acidic residues. The segment at 728–782 (IDEESSDSNDNDDAEIQERITEESENSEEVMSETSVSIEDATSLTSSRNSINSEE) is disordered. Positions 767–782 (DATSLTSSRNSINSEE) are enriched in polar residues.

It belongs to the SLC26A/SulP transporter (TC 2.A.53) family.

The protein localises to the membrane. Functionally, possible sulfate transporter. This chain is Sulfate permease family protein 3 (sulp-3), found in Caenorhabditis elegans.